We begin with the raw amino-acid sequence, 212 residues long: Hevein-like preproprotein (212 aa).

A signal peptide spans 1-21; sequence MKIRLSITIILLSYTVATVAG. In terms of domain architecture, Chitin-binding type-1 spans 22–64; it reads QQCGRQGGGRTCPGNICCSQYGYCGTTADYCSPTNNCQSNCWG. 7 disulfide bridges follow: Cys-24–Cys-39, Cys-33–Cys-45, Cys-38–Cys-52, Cys-58–Cys-62, Cys-100–Cys-132, Cys-121–Cys-155, and Cys-135–Cys-191. One can recognise a Barwin domain in the interval 72–193; sequence ESASNVRATY…VDYQFVDCGN (122 aa).

CB-HEL interacts strongly with a fungal fruiting body lectin.

It localises to the vacuole. In terms of biological role, fungal growth inhibitors. Neither CB-HEL nor CD-HEL have chitinase activity, but both have antimicrobial activities. CD-HEL has RNase, but no DNase activity. This Arabidopsis thaliana (Mouse-ear cress) protein is Hevein-like preproprotein (HEL).